A 333-amino-acid polypeptide reads, in one-letter code: Low specificity L-threonine aldolase (333 aa).

An N6-(pyridoxal phosphate)lysine modification is found at lysine 197.

This sequence belongs to the threonine aldolase family. In terms of assembly, homotetramer. Requires pyridoxal 5'-phosphate as cofactor.

It catalyses the reaction L-threonine = acetaldehyde + glycine. The catalysed reaction is L-allo-threonine = acetaldehyde + glycine. Catalyzes the cleavage of L-allo-threonine and L-threonine to glycine and acetaldehyde. L-threo-phenylserine and L-erythro-phenylserine are also good substrates. The sequence is that of Low specificity L-threonine aldolase (ltaE) from Escherichia coli (strain K12).